We begin with the raw amino-acid sequence, 238 residues long: Cysteine-rich venom protein pseudechetoxin-like (238 aa).

The signal sequence occupies residues 1-19 (MIAFIVLLSLAAVLQQSSG). A propeptide spanning residues 20-28 (TVDFASESS) is cleaved from the precursor. Positions 38 to 164 (VDKHNALRRS…STKYLYVCQY (127 aa)) constitute an SCP domain. 8 cysteine pairs are disulfide-bonded: C75/C153, C92/C165, C148/C162, C184/C191, C187/C196, C200/C233, C209/C227, and C218/C231. Residues 200 to 233 (CKYEDDFSNCKALAKNSKCQTEWIKSKCPAACFC) enclose the ShKT domain.

This sequence belongs to the CRISP family. In terms of tissue distribution, expressed by the venom gland.

The protein resides in the secreted. Blocks olfactory (CNGA2) and retinal (CNGA1) CNG channel currents. Does not affect neither depolarization- nor caffeine-induced contraction of smooth muscle. The sequence is that of Cysteine-rich venom protein pseudechetoxin-like from Notechis scutatus scutatus (Mainland tiger snake).